The chain runs to 687 residues: Guanine-nucleotide exchange factor YEL1 (687 aa).

The 208-residue stretch at 57 to 264 (ILQNKEAAND…SEYYKTLNET (208 aa)) folds into the SEC7 domain. Positions 63–97 (AANDEKPVIPTTDTATAGTGTEDISSTQSEETDQN) are disordered. Residues 73–83 (TTDTATAGTGT) are compositionally biased toward low complexity. Phosphothreonine is present on Thr-290. Phosphoserine occurs at positions 293 and 299. A PH domain is found at 412–551 (TSRRTSLSYL…DCINFWAGRI (140 aa)).

It belongs to the YEL1 family.

It localises to the cytoplasm. It is found in the cell membrane. Its subcellular location is the bud neck. The protein resides in the bud tip. In terms of biological role, guanine nucleotide exchange factor for ARF3 required for localization of ARF3 to the bud neck and tip and involved in actin patch polarization. The protein is Guanine-nucleotide exchange factor YEL1 (YEL1) of Saccharomyces cerevisiae (strain JAY291) (Baker's yeast).